A 239-amino-acid polypeptide reads, in one-letter code: Diablo IAP-binding mitochondrial protein (239 aa).

The N-terminal 21 residues, 1-21, are a transit peptide targeting the mitochondrion; it reads MAALKSWLSRSVTSFFRYRQC. The IAP-binding motif lies at 56 to 60; sequence AVPIA. Positions 217–239 are disordered; the sequence is RQKTQEEGEERAESEQEAYLRED.

Belongs to the Smac/DIABLO protein family. As to quaternary structure, homodimer. Interacts with BIRC2/c-IAP1 (via BIR3 domain). Interacts with BIRC6/BRUCE; inhibits BIRC6 activity. Interacts with BIRC7/livin. Interacts with XIAP/BIRC4 (via BIR3 domain). Interacts with the monomeric and dimeric form of BIRC5/survivin. Interacts with AREL1 (via HECT domain); in the cytoplasm following induction of apoptosis. Interacts with BEX3. Post-translationally, ubiquitinated by BIRC7/livin. Ubiquitinated by BIRC6. The precursor form is proteolytically cleaved by mitochondrial processing peptidase MPP to remove the transit peptide and produce an intermediate form. This is then processed by PARL to produce the mature cleaved form which is released from mitochondria into the cytosol in apoptotic cells. Ubiquitously expressed with highest expression in testis. Expression is also high in heart, liver, kidney, spleen, prostate and ovary. Low in brain, lung, thymus and peripheral blood leukocytes. Isoform 3 is ubiquitously expressed.

The protein resides in the mitochondrion. It is found in the cytoplasm. Its subcellular location is the cytosol. Its function is as follows. Promotes apoptosis by activating caspases in the cytochrome c/Apaf-1/caspase-9 pathway. Acts by opposing the inhibitory activity of inhibitor of apoptosis proteins (IAP). Inhibits the activity of BIRC6/BRUCE by inhibiting its binding to caspases. In terms of biological role, attenuates the stability and apoptosis-inhibiting activity of XIAP/BIRC4 by promoting XIAP/BIRC4 ubiquitination and degradation through the ubiquitin-proteasome pathway. Also disrupts XIAP/BIRC4 interacting with processed caspase-9 and promotes caspase-3 activation. Functionally, defective in the capacity to down-regulate the XIAP/BIRC4 abundance. The sequence is that of Diablo IAP-binding mitochondrial protein from Homo sapiens (Human).